The chain runs to 413 residues: Imidazolonepropionase (413 aa).

The Fe(3+) site is built by H70 and H72. The Zn(2+) site is built by H70 and H72. R79, Y142, and H175 together coordinate 4-imidazolone-5-propanoate. Y142 is an N-formimidoyl-L-glutamate binding site. H240 is a binding site for Fe(3+). Residue H240 participates in Zn(2+) binding. E243 provides a ligand contact to 4-imidazolone-5-propanoate. Residue D315 coordinates Fe(3+). Zn(2+) is bound at residue D315. The N-formimidoyl-L-glutamate site is built by N317 and G319. S320 contacts 4-imidazolone-5-propanoate.

Belongs to the metallo-dependent hydrolases superfamily. HutI family. The cofactor is Zn(2+). Fe(3+) is required as a cofactor.

Its subcellular location is the cytoplasm. It carries out the reaction 4-imidazolone-5-propanoate + H2O = N-formimidoyl-L-glutamate. It functions in the pathway amino-acid degradation; L-histidine degradation into L-glutamate; N-formimidoyl-L-glutamate from L-histidine: step 3/3. Catalyzes the hydrolytic cleavage of the carbon-nitrogen bond in imidazolone-5-propanoate to yield N-formimidoyl-L-glutamate. It is the third step in the universal histidine degradation pathway. The protein is Imidazolonepropionase of Treponema denticola (strain ATCC 35405 / DSM 14222 / CIP 103919 / JCM 8153 / KCTC 15104).